The sequence spans 235 residues: Large ribosomal subunit protein uL1 (235 aa).

This sequence belongs to the universal ribosomal protein uL1 family. As to quaternary structure, part of the 50S ribosomal subunit.

Binds directly to 23S rRNA. The L1 stalk is quite mobile in the ribosome, and is involved in E site tRNA release. Its function is as follows. Protein L1 is also a translational repressor protein, it controls the translation of the L11 operon by binding to its mRNA. The polypeptide is Large ribosomal subunit protein uL1 (Paenarthrobacter aurescens (strain TC1)).